We begin with the raw amino-acid sequence, 269 residues long: Phosphate import ATP-binding protein PstB 2 (269 aa).

The ABC transporter domain maps to 22–264 (LSTNDLRVFY…PSLQSTEDYV (243 aa)). ATP is bound at residue 55–62 (GPSGSGKS).

The protein belongs to the ABC transporter superfamily. Phosphate importer (TC 3.A.1.7) family. The complex is composed of two ATP-binding proteins (PstB), two transmembrane proteins (PstC and PstA) and a solute-binding protein (PstS).

The protein localises to the cell membrane. The enzyme catalyses phosphate(out) + ATP + H2O = ADP + 2 phosphate(in) + H(+). Functionally, part of the ABC transporter complex PstSACB involved in phosphate import. Responsible for energy coupling to the transport system. In Lactococcus lactis subsp. lactis (strain IL1403) (Streptococcus lactis), this protein is Phosphate import ATP-binding protein PstB 2.